The primary structure comprises 824 residues: C-Jun-amino-terminal kinase-interacting protein 2 (824 aa).

Disordered regions lie at residues 1–28 (MADRAEMFSLSTFHSLSPPGCRPPQDIS), 40–160 (ITDD…GFDL), 172–349 (CSPA…DSPW), and 361–501 (EGSS…APRD). Residues 77–110 (DFQEFEMIDDNEEEDDEDEEEEEEEEEGDGEGQE) are compositionally biased toward acidic residues. Residues 110 to 275 (EGGDPGSEAP…RMISSISETE (166 aa)) form a JNK-binding domain (JBD) region. Polar residues predominate over residues 141-156 (LRLTTLGAQDSLNNNG). The tract at residues 239 to 498 (GRGGRRSSQE…PGGRGTGPSA (260 aa)) is necessary for interaction with FGF13. S254, S302, and S305 each carry phosphoserine. Residues 268 to 305 (ISSISETELELSSDGGSSSSGRSSHLTNSIEEASSPAS) show a composition bias toward low complexity. A compositionally biased stretch (acidic residues) spans 327-346 (TNSEYESGSESEPDLSEDAD). Positions 416 to 432 (APPPPAPAAPRPGPAQP) are enriched in pro residues. The segment covering 451-467 (AAPGRAARPGRACSAAC) has biased composition (low complexity). Positions 468–484 (SEEEDEEDDEEEEDAED) are enriched in acidic residues. The 62-residue stretch at 604–665 (EREQTHRAVF…PAFYAHAVPG (62 aa)) folds into the SH3 domain. The region spanning 677–813 (PCWVERFDVQ…FLEYYQEHLA (137 aa)) is the PID domain.

It belongs to the JIP scaffold family. Forms homo- or heterooligomeric complexes. Binds specific components of the JNK signaling pathway namely JNK1, JNK2, JNK3, MAP2K7, MAP3K10, MAP3K11, MAP3K12 and MAPK13. Also binds the proline-rich domain-containing splice variant of apolipoprotein E receptor 2 (ApoER2). Binds the cytoplasmic tails of LRP1 and LRP2 (Megalin). Binds the TPR motif-containing C-terminal of kinesin light chain, Klc1, pre-assembled MAPK8IP1 scaffolding complexes are then transported as a cargo of kinesin, to the required subcellular location. Interacts with the cytoplasmic domain of APP. Interacts with DCLK2. Interacts with TIAM1 and TIAM2. Interacts with FGF13; enables the interaction with MAPK13 and may regulate the MAPK8IP2 scaffolding activity. Interacts with SH3RF2. In terms of tissue distribution, expressed mainly in the brain and pancreas, including insulin-secreting cells. In the nervous system, more abundantly expressed in the cerebellum, pituitary gland, occipital lobe and the amygdala. Also expressed in fetal brain. Very low levels found in uterus, ovary, prostate, colon, testis, adrenal gland, thyroid gland and salivary gland.

It localises to the cytoplasm. In terms of biological role, the JNK-interacting protein (JIP) group of scaffold proteins selectively mediates JNK signaling by aggregating specific components of the MAPK cascade to form a functional JNK signaling module. JIP2 inhibits IL1 beta-induced apoptosis in insulin-secreting cells. May function as a regulator of vesicle transport, through interactions with the JNK-signaling components and motor proteins. The polypeptide is C-Jun-amino-terminal kinase-interacting protein 2 (MAPK8IP2) (Homo sapiens (Human)).